Consider the following 356-residue polypeptide: 3-isopropylmalate dehydrogenase (356 aa).

4 residues coordinate substrate: arginine 91, arginine 101, arginine 129, and aspartate 223. Residues aspartate 223, aspartate 247, and aspartate 251 each coordinate Mg(2+). 281-293 contributes to the NAD(+) binding site; sequence GSAPDIAGKGIAN.

Belongs to the isocitrate and isopropylmalate dehydrogenases family. LeuB type 1 subfamily. As to quaternary structure, homodimer. It depends on Mg(2+) as a cofactor. The cofactor is Mn(2+).

It is found in the cytoplasm. It carries out the reaction (2R,3S)-3-isopropylmalate + NAD(+) = 4-methyl-2-oxopentanoate + CO2 + NADH. Its pathway is amino-acid biosynthesis; L-leucine biosynthesis; L-leucine from 3-methyl-2-oxobutanoate: step 3/4. Catalyzes the oxidation of 3-carboxy-2-hydroxy-4-methylpentanoate (3-isopropylmalate) to 3-carboxy-4-methyl-2-oxopentanoate. The product decarboxylates to 4-methyl-2 oxopentanoate. The protein is 3-isopropylmalate dehydrogenase of Ralstonia nicotianae (strain ATCC BAA-1114 / GMI1000) (Ralstonia solanacearum).